A 155-amino-acid chain; its full sequence is Ribosomal RNA large subunit methyltransferase H (155 aa).

Residues leucine 73, glycine 104, and 123–128 each bind S-adenosyl-L-methionine; that span reads LSALTL.

It belongs to the RNA methyltransferase RlmH family. Homodimer.

It is found in the cytoplasm. The catalysed reaction is pseudouridine(1915) in 23S rRNA + S-adenosyl-L-methionine = N(3)-methylpseudouridine(1915) in 23S rRNA + S-adenosyl-L-homocysteine + H(+). Its function is as follows. Specifically methylates the pseudouridine at position 1915 (m3Psi1915) in 23S rRNA. This is Ribosomal RNA large subunit methyltransferase H from Coxiella burnetii (strain Dugway 5J108-111).